A 285-amino-acid chain; its full sequence is Eukaryotic translation initiation factor 3 subunit F-2 (285 aa).

The 135-residue stretch at 11-145 (VLIKPLVLFQ…TRLYCAVEIG (135 aa)) folds into the MPN domain.

Belongs to the eIF-3 subunit F family. As to quaternary structure, component of the eukaryotic translation initiation factor 3 (eIF-3) complex. The eIF-3 complex interacts with pix.

The protein localises to the cytoplasm. Its function is as follows. Component of the eukaryotic translation initiation factor 3 (eIF-3) complex, which is involved in protein synthesis of a specialized repertoire of mRNAs and, together with other initiation factors, stimulates binding of mRNA and methionyl-tRNAi to the 40S ribosome. The eIF-3 complex specifically targets and initiates translation of a subset of mRNAs involved in cell proliferation. This Drosophila erecta (Fruit fly) protein is Eukaryotic translation initiation factor 3 subunit F-2.